The primary structure comprises 336 residues: MGDLELGFKASAEQFGPRELVDIAVLAEEHGMDSATVSDHFQPWRHKGGHAPFSLAWMAAVGARTERIKLGTSVLTPTFRYNPAVIAQAFATMGCLYPGRVMLGVGTGEALNEIATGYQGEWPEFKERFARLREAVELMRALWTGDRVDFDGQYYRTVGASIYDVPEGGVPIYIAAGGPLVARYAGRAGDGFICTSGKGMELYTDKLMPAVAEGAAKAGRSVDSIDRMIEIKISYDTDPELALENTRFWAPLSLTAEQKHSITDPIEMEAAADALPIEQIAKRWIVASDPDQAVEQIKPYLDAGLNHLVFHAPGHDQRRFLDLFQRDLAPRLRALA.

D39 is a coenzyme F420-(gamma-Glu)n binding site. Catalysis depends on H40, which acts as the Proton donor. Residues T76 and 107–108 (TG) contribute to the coenzyme F420-(gamma-Glu)n site. The active-site Proton acceptor is E109. Coenzyme F420-(gamma-Glu)n is bound by residues N112, 177–178 (GG), and 180–181 (LV). The substrate site is built by T195, K198, K259, and R283.

It belongs to the F420-dependent glucose-6-phosphate dehydrogenase family. Homodimer.

The catalysed reaction is oxidized coenzyme F420-(gamma-L-Glu)(n) + D-glucose 6-phosphate + H(+) = 6-phospho-D-glucono-1,5-lactone + reduced coenzyme F420-(gamma-L-Glu)(n). Catalyzes the coenzyme F420-dependent oxidation of glucose 6-phosphate (G6P) to 6-phosphogluconolactone. In Nocardia farcinica (strain IFM 10152), this protein is F420-dependent glucose-6-phosphate dehydrogenase.